A 312-amino-acid polypeptide reads, in one-letter code: Putative clathrin assembly protein At2g01920 (312 aa).

In terms of domain architecture, ENTH spans 21–152 (LITATDEKFT…ILYYNKNMIR (132 aa)).

The protein localises to the membrane. Its subcellular location is the clathrin-coated pit. It localises to the golgi apparatus. The protein resides in the cytoplasmic vesicle. It is found in the clathrin-coated vesicle. The polypeptide is Putative clathrin assembly protein At2g01920 (Arabidopsis thaliana (Mouse-ear cress)).